A 309-amino-acid chain; its full sequence is Aspartate carbamoyltransferase catalytic subunit (309 aa).

Arginine 55 and threonine 56 together coordinate carbamoyl phosphate. Residue lysine 85 coordinates L-aspartate. Positions 106, 135, and 138 each coordinate carbamoyl phosphate. The L-aspartate site is built by arginine 168 and arginine 230. Positions 268 and 269 each coordinate carbamoyl phosphate.

Belongs to the aspartate/ornithine carbamoyltransferase superfamily. ATCase family. As to quaternary structure, heterododecamer (2C3:3R2) of six catalytic PyrB chains organized as two trimers (C3), and six regulatory PyrI chains organized as three dimers (R2).

It carries out the reaction carbamoyl phosphate + L-aspartate = N-carbamoyl-L-aspartate + phosphate + H(+). Its pathway is pyrimidine metabolism; UMP biosynthesis via de novo pathway; (S)-dihydroorotate from bicarbonate: step 2/3. Functionally, catalyzes the condensation of carbamoyl phosphate and aspartate to form carbamoyl aspartate and inorganic phosphate, the committed step in the de novo pyrimidine nucleotide biosynthesis pathway. The chain is Aspartate carbamoyltransferase catalytic subunit from Vibrio cholerae serotype O1 (strain ATCC 39315 / El Tor Inaba N16961).